A 193-amino-acid polypeptide reads, in one-letter code: Interleukin-18 (193 aa).

Residues 1–36 (MAANLIEDNCINLVKMKFVNNTLYFKAESDEGLESD) constitute a propeptide that is removed on maturation.

The protein belongs to the IL-1 family. As to quaternary structure, forms a ternary complex with ligand-binding receptor subunit IL18R1 and signaling receptor subunit IL18RAP at the plasma membrane. Mature IL18 first binds to IL18R1 forming a low affinity binary complex, which then interacts with IL18RAP to form a high affinity ternary complex that signals inside the cell. Interacts with cargo receptor TMED10; the interaction mediates the translocation from the cytoplasm into the ERGIC (endoplasmic reticulum-Golgi intermediate compartment) and thereby secretion. In terms of processing, the pro-IL-18 precursor is processed by CASP1, CASP4 or CASP5 to yield its mature, active form. The pro-IL-18 precursor features autoinhibitory interactions between the propeptide and the post-cleavage-site region, preventing recognition by the IL18R1 receptor. Processing by CASP1, CASP4 or CASP5 induces conformational changes to generate critical receptor-binding sites. The mature form is then secreted and released in the extracellular milieu by passing through the gasdermin-D (GSDMD) pore. In contrast, cleavage by CASP3 inactivates IL18.

The protein resides in the cytoplasm. The protein localises to the cytosol. Its subcellular location is the secreted. Pro-inflammatory cytokine primarily involved in epithelial barrier repair, polarized T-helper 1 (Th1) cell and natural killer (NK) cell immune responses. Upon binding to IL18R1 and IL18RAP, forms a signaling ternary complex which activates NF-kappa-B, triggering synthesis of inflammatory mediators. Synergizes with IL12/interleukin-12 to induce IFNG synthesis from T-helper 1 (Th1) cells and natural killer (NK) cells. Involved in transduction of inflammation downstream of pyroptosis: its mature form is specifically released in the extracellular milieu by passing through the gasdermin-D (GSDMD) pore. The chain is Interleukin-18 (IL18) from Canis lupus familiaris (Dog).